The following is a 791-amino-acid chain: Pleckstrin homology domain-containing family H member 3 (791 aa).

Positions 1-18 (MPLPGGLWWLLCCRRGFT) are cleaved as a signal peptide. Residues 29-41 (LSGDGDEDEDDET) are compositionally biased toward acidic residues. Residues 29–71 (LSGDGDEDEDDETFELRSPSPAGGGRGSLDVTLTQPTRNGPIT) form a disordered region. Phosphoserine is present on S30. The span at 59 to 71 (VTLTQPTRNGPIT) shows a compositional bias: polar residues. A PH domain is found at 95–199 (DVIVKGWLYR…WGVALREVIA (105 aa)). A MyTH4 domain is found at 237-399 (HTSSALYAPL…PSLAEISALS (163 aa)). An FERM domain is found at 404–755 (LLCTVHCPGA…ANPSPERPCS (352 aa)). Residues 549–559 (PRGPLPLLDRL) show a composition bias toward low complexity. Disordered stretches follow at residues 549–580 (PRGPLPLLDRLMPPPAPPREQPSRPARRPPPS) and 593–623 (LAKRRAERARRIGTGRSTESTAQVGGGGGGS). Residues 594–605 (AKRRAERARRIG) are compositionally biased toward basic residues. The residue at position 636 (R636) is an Omega-N-methylarginine. The disordered stretch occupies residues 748–791 (PSPERPCSSSGPPSQDLSDTSPPSQHQVLEKPQGQSGCLRQLQD). Positions 754–791 (CSSSGPPSQDLSDTSPPSQHQVLEKPQGQSGCLRQLQD) are enriched in polar residues.

The chain is Pleckstrin homology domain-containing family H member 3 (Plekhh3) from Rattus norvegicus (Rat).